Reading from the N-terminus, the 342-residue chain is MIRVAINGYGRIGRSILRALYESGKRQQIQIVAINELAKPEAIRHLTQYDTTHGRFGQTVELQEGKLHIGDDAIALFHQSDATKLPWGELDIDIVFEASGSLIEREACEAHIISGAKQVLISHPSSQDVDATIVYGVNHHLLAAEHTVVSNASCTTNCIVPVIDVLDSHFGVISGAITTIHSAMNDQQVIDAYHDDLRRTRAAGQSIIPVDTKLARGIERILPKMKDKFEAISVRVPTINVTAIDVSVTLRDRVDISIINSVLQQAAKGRFDGILGYTDEPLVSCDFNHDPRSSIVDATQTRVSDGHLVKLLLWCDNEWGFANRMLDTSLAMIRAKSAKSVK.

Arg11–Ile12 is a binding site for NAD(+). Substrate-binding positions include Ser153 to Thr155, Arg199, Thr212 to Lys213, and Arg235. Catalysis depends on Cys154, which acts as the Nucleophile. Position 317 (Asn317) interacts with NAD(+).

The protein belongs to the glyceraldehyde-3-phosphate dehydrogenase family. Epd subfamily. Homotetramer.

The protein localises to the cytoplasm. It catalyses the reaction D-erythrose 4-phosphate + NAD(+) + H2O = 4-phospho-D-erythronate + NADH + 2 H(+). It participates in cofactor biosynthesis; pyridoxine 5'-phosphate biosynthesis; pyridoxine 5'-phosphate from D-erythrose 4-phosphate: step 1/5. Catalyzes the NAD-dependent conversion of D-erythrose 4-phosphate to 4-phosphoerythronate. This Shewanella denitrificans (strain OS217 / ATCC BAA-1090 / DSM 15013) protein is D-erythrose-4-phosphate dehydrogenase.